Reading from the N-terminus, the 194-residue chain is Xanthine phosphoribosyltransferase (194 aa).

Xanthine is bound by residues L20 and N27. 128-132 provides a ligand contact to 5-phospho-alpha-D-ribose 1-diphosphate; that stretch reads ANGCA. K156 contacts xanthine.

It belongs to the purine/pyrimidine phosphoribosyltransferase family. Xpt subfamily. In terms of assembly, homodimer.

It is found in the cytoplasm. The catalysed reaction is XMP + diphosphate = xanthine + 5-phospho-alpha-D-ribose 1-diphosphate. It functions in the pathway purine metabolism; XMP biosynthesis via salvage pathway; XMP from xanthine: step 1/1. Functionally, converts the preformed base xanthine, a product of nucleic acid breakdown, to xanthosine 5'-monophosphate (XMP), so it can be reused for RNA or DNA synthesis. The polypeptide is Xanthine phosphoribosyltransferase (Lachnoclostridium phytofermentans (strain ATCC 700394 / DSM 18823 / ISDg) (Clostridium phytofermentans)).